The following is an 843-amino-acid chain: Elongation factor 2 (843 aa).

One can recognise a tr-type G domain in the interval 17-344 (HNIRNMSVIA…MMIFHLPSPH (328 aa)). Residues 26-33 (AHVDHGKS) and 158-161 (NKMD) each bind GTP. Residue His-700 is modified to Diphthamide. Ser-837 is modified (phosphoserine).

This sequence belongs to the TRAFAC class translation factor GTPase superfamily. Classic translation factor GTPase family. As to quaternary structure, may interact with glutaredoxins (Grxs). Expressed in root, stem, leaves, flowers and siliques.

Its subcellular location is the cytoplasm. The enzyme catalyses GTP + H2O = GDP + phosphate + H(+). Its pathway is protein biosynthesis; polypeptide chain elongation. Functionally, catalyzes the GTP-dependent ribosomal translocation step during translation elongation. During this step, the ribosome changes from the pre-translocational (PRE) to the post-translocational (POST) state as the newly formed A-site-bound peptidyl-tRNA and P-site-bound deacylated tRNA move to the P and E sites, respectively. Catalyzes the coordinated movement of the two tRNA molecules, the mRNA and conformational changes in the ribosome. Involved in cold responses leading to freezing tolerance via the induction of cold-responsive genes. This chain is Elongation factor 2, found in Arabidopsis thaliana (Mouse-ear cress).